The following is a 1896-amino-acid chain: Trinucleotide repeat-containing gene 6A protein (1896 aa).

Composition is skewed to basic and acidic residues over residues Met1–Val21 and Lys39–Glu57. 4 disordered regions span residues Met1 to Arg137, Ser159 to Thr209, Glu222 to Glu250, and Ala257 to Ser276. The interaction with argonaute family proteins stretch occupies residues Met1–Leu917. Composition is skewed to low complexity over residues Ala69 to Gln93 and Gln101 to Gln113. The span at Arg125–Arg137 shows a compositional bias: basic residues. The sufficient for interaction with AGO1, AGO3 and AGO4 stretch occupies residues Ile239 to Ser488. Sufficient for interaction with AGO2 stretches follow at residues Val255–Gly331, Gly303–Gly384, Asn325–Phe424, Ser394–Ala480, and Thr487–Glu736. Composition is skewed to polar residues over residues Val396–Glu410 and Ser417–Gln429. Disordered regions lie at residues Val396–Pro461, Phe548–Ile683, Leu703–Lys998, Ile1011–Trp1126, and Gln1143–Glu1182. Residues Asn430–Asn443 show a composition bias toward low complexity. Residues Phe444–Pro461 show a composition bias toward polar residues. The tract at residues Asn551–Gln1279 is sufficient for interaction with AGO1 and AGO4. A compositionally biased stretch (gly residues) spans Ser573–Arg584. Polar residues-rich tracts occupy residues Gln591–Gly617 and Gly635–Val647. Positions Gly665 to Ile683 are enriched in basic and acidic residues. A compositionally biased stretch (polar residues) spans Leu703–Glu722. Over residues Thr723 to Asn733 the composition is skewed to basic and acidic residues. Ser724 is subject to Phosphoserine. Polar residues predominate over residues Trp738–Ser766. The span at Ser858–Gly871 shows a compositional bias: low complexity. Residue Ser863 is modified to Phosphoserine. 2 stretches are compositionally biased toward polar residues: residues Gly876–Gly906 and Lys924–Ile937. The residue at position 976 (Ser976) is a Phosphoserine. 3 stretches are compositionally biased toward polar residues: residues Ala1033–Gly1042, Thr1054–Ser1064, and Ala1082–Lys1105. The tract at residues Val1059–Glu1129 is sufficient for interaction with AGO2. Positions Gln1143–Leu1163 are enriched in low complexity. Residues Ser1197 and Ser1255 each carry the phosphoserine modification. Disordered stretches follow at residues Gly1234–Met1256, Val1273–Leu1306, and Gln1360–Gln1395. 2 stretches are compositionally biased toward low complexity: residues Gln1284–Pro1296 and Gln1360–Gln1376. A Phosphothreonine modification is found at Thr1406. Disordered regions lie at residues Met1512 to Gly1570 and Pro1659 to Ser1685. Ser1520 bears the Phosphoserine mark. Residues Thr1605–Met1896 are sufficient for interaction with AGO2. An RRM domain is found at Asn1716–Glu1788. Phosphoserine occurs at positions 1804 and 1825.

Belongs to the GW182 family. In terms of assembly, interacts with AGO2. Interacts with AGO1, AGO3 and AGO4. Interacts with CNOT1; the interaction is direct and mediates the association with the CCR4-NOT complex. Interacts with ZC3H12A. Interacts with SND1. Interacts with GARRE1.

It localises to the cytoplasm. The protein resides in the P-body. Functionally, plays a role in RNA-mediated gene silencing by both micro-RNAs (miRNAs) and short interfering RNAs (siRNAs). Required for miRNA-dependent repression of translation and for siRNA-dependent endonucleolytic cleavage of complementary mRNAs by argonaute family proteins. As a scaffolding protein, associates with argonaute proteins bound to partially complementary mRNAs, and can simultaneously recruit CCR4-NOT and PAN deadenylase complexes. This chain is Trinucleotide repeat-containing gene 6A protein (Tnrc6a), found in Mus musculus (Mouse).